We begin with the raw amino-acid sequence, 406 residues long: CRISP/Allergen/PR-1 (406 aa).

An N-terminal signal peptide occupies residues 1–18; that stretch reads MHFQVILMMMWLWLEAEG. N-linked (GlcNAc...) asparagine glycosylation is present at Asn-39. Positions 58 to 205 constitute an SCP domain; that stretch reads LREHNKLRSR…TFKDLYTCNY (148 aa).

Belongs to the CRISP family. Post-translationally, contains 9 disulfide bonds. As to expression, expressed by the venom gland.

The protein localises to the secreted. This Trittame loki (Brush-footed trapdoor spider) protein is CRISP/Allergen/PR-1.